The chain runs to 1172 residues: DNA-directed RNA polymerase subunit beta (1172 aa).

This sequence belongs to the RNA polymerase beta chain family. The RNAP catalytic core consists of 2 alpha, 1 beta, 1 beta' and 1 omega subunit. When a sigma factor is associated with the core the holoenzyme is formed, which can initiate transcription.

It carries out the reaction RNA(n) + a ribonucleoside 5'-triphosphate = RNA(n+1) + diphosphate. In terms of biological role, DNA-dependent RNA polymerase catalyzes the transcription of DNA into RNA using the four ribonucleoside triphosphates as substrates. This Mycobacterium sp. (strain JLS) protein is DNA-directed RNA polymerase subunit beta.